The primary structure comprises 421 residues: Imidazolonepropionase (421 aa).

Fe(3+)-binding residues include His81 and His83. Zn(2+) is bound by residues His81 and His83. 4-imidazolone-5-propanoate-binding residues include Arg90, Tyr153, and His186. Tyr153 lines the N-formimidoyl-L-glutamate pocket. Residue His251 coordinates Fe(3+). His251 provides a ligand contact to Zn(2+). Residue Glu254 participates in 4-imidazolone-5-propanoate binding. Residue Asp326 participates in Fe(3+) binding. Asp326 contributes to the Zn(2+) binding site. Asn328 and Gly330 together coordinate N-formimidoyl-L-glutamate. A 4-imidazolone-5-propanoate-binding site is contributed by Ser331.

It belongs to the metallo-dependent hydrolases superfamily. HutI family. Requires Zn(2+) as cofactor. Fe(3+) serves as cofactor.

The protein resides in the cytoplasm. The enzyme catalyses 4-imidazolone-5-propanoate + H2O = N-formimidoyl-L-glutamate. The protein operates within amino-acid degradation; L-histidine degradation into L-glutamate; N-formimidoyl-L-glutamate from L-histidine: step 3/3. Catalyzes the hydrolytic cleavage of the carbon-nitrogen bond in imidazolone-5-propanoate to yield N-formimidoyl-L-glutamate. It is the third step in the universal histidine degradation pathway. The chain is Imidazolonepropionase from Streptococcus pyogenes serotype M12 (strain MGAS2096).